Reading from the N-terminus, the 103-residue chain is Phosphoribosyl-ATP pyrophosphatase (103 aa).

It belongs to the PRA-PH family.

It localises to the cytoplasm. The enzyme catalyses 1-(5-phospho-beta-D-ribosyl)-ATP + H2O = 1-(5-phospho-beta-D-ribosyl)-5'-AMP + diphosphate + H(+). It participates in amino-acid biosynthesis; L-histidine biosynthesis; L-histidine from 5-phospho-alpha-D-ribose 1-diphosphate: step 2/9. In Listeria monocytogenes serotype 4b (strain CLIP80459), this protein is Phosphoribosyl-ATP pyrophosphatase.